Here is a 39-residue protein sequence, read N- to C-terminus: Potassium channel toxin alpha-KTx 2.17 (39 aa).

Disulfide bonds link Cys-7/Cys-29, Cys-13/Cys-34, and Cys-17/Cys-36. Isoleucine amide is present on Ile-39.

Belongs to the short scorpion toxin superfamily. Potassium channel inhibitor family. Alpha-KTx 02 subfamily. In terms of tissue distribution, expressed by the venom gland.

The protein resides in the secreted. In terms of biological role, blocks human voltage-gated potassium channels Kv1.1/KCNA1 (IC(50)=4.8 nM) and Kv1.2/KCNA2 (IC(50)=2.9 nM). In Centruroides tecomanus (Scorpion), this protein is Potassium channel toxin alpha-KTx 2.17.